Here is a 275-residue protein sequence, read N- to C-terminus: Probable 2' cyclic ADP-D-ribose synthase TcpB (275 aa).

Positions 17 to 32 are enriched in basic and acidic residues; sequence RLKADDSREMSKEKQA. The disordered stretch occupies residues 17–66; sequence RLKADDSREMSKEKQAQSKAHKAQQAISSAKSLSTQKSKMSELERATRDG. A compositionally biased stretch (low complexity) spans 39 to 48; the sequence is AQQAISSAKS. A compositionally biased stretch (basic and acidic residues) spans 55 to 64; the sequence is KMSELERATR. Residues 142–275 enclose the TIR domain; that stretch reads EEYDFFISHA…EIAKELHSLI (134 aa). NAD(+) is bound by residues 151-152 and K181; that span reads AS. E217 is a catalytic residue.

As to quaternary structure, homodimer. Interacts with host TIRAP, and probably host MYD88. Interacts with host TLR4, abolishes the interaction of host TIRAP with TLR4.

The protein resides in the secreted. It is found in the host cell membrane. It catalyses the reaction NAD(+) + H2O = ADP-D-ribose + nicotinamide + H(+). It carries out the reaction NAD(+) = 2'cADPR + nicotinamide + H(+). Its function is as follows. Virulence factor that interferes with host Toll-like receptor 2 (TLR2) and TLR4 signaling, resulting in the reduction of dendritic cell maturation, inhibition of pro-inflammatory cytokine secretion and impaired NF-kappa-B activation in macrophages. Binds host lipids. Has NAD(+) hydrolase (NADase) activity, catalyzes cleavage of NAD(+) into ADP-D-ribose (ADPR) and nicotinamide, also generates a cyclization variant of cyclic ADPR (cADPR), termed v-cADPR (probably 2'cADPR). The chain is Probable 2' cyclic ADP-D-ribose synthase TcpB (tcpB) from Brucella melitensis biotype 2 (strain ATCC 23457).